We begin with the raw amino-acid sequence, 137 residues long: Nucleoside diphosphate kinase (137 aa).

Positions 10, 58, 86, 92, 103, and 113 each coordinate ATP. H116 functions as the Pros-phosphohistidine intermediate in the catalytic mechanism.

The protein belongs to the NDK family. Homotetramer. It depends on Mg(2+) as a cofactor.

It localises to the cytoplasm. The enzyme catalyses a 2'-deoxyribonucleoside 5'-diphosphate + ATP = a 2'-deoxyribonucleoside 5'-triphosphate + ADP. It catalyses the reaction a ribonucleoside 5'-diphosphate + ATP = a ribonucleoside 5'-triphosphate + ADP. Functionally, major role in the synthesis of nucleoside triphosphates other than ATP. The ATP gamma phosphate is transferred to the NDP beta phosphate via a ping-pong mechanism, using a phosphorylated active-site intermediate. In Helicobacter pylori (strain Shi470), this protein is Nucleoside diphosphate kinase.